A 180-amino-acid polypeptide reads, in one-letter code: Insertion element IS1296 uncharacterized 21.4 kDa protein (180 aa).

It belongs to the IS150/IS1296 orfA family.

This Mycoplasma mycoides subsp. mycoides SC protein is Insertion element IS1296 uncharacterized 21.4 kDa protein.